Consider the following 689-residue polypeptide: Long-chain-fatty-acid--CoA ligase 2 (689 aa).

An ATP-binding site is contributed by 252 to 263; that stretch reads YTSGSTGKPKGV. An FACS motif is present at residues 518-567; that stretch reads DGWFKTGDVGEIAKGNTLRLIDRKKNIVKSLNGEYIALEKIEAQFFTSPL.

Belongs to the ATP-dependent AMP-binding enzyme family. Requires Mg(2+) as cofactor.

The protein localises to the golgi apparatus. Its subcellular location is the vacuole membrane. It catalyses the reaction a long-chain fatty acid + ATP + CoA = a long-chain fatty acyl-CoA + AMP + diphosphate. Esterification, concomitant with transport, of endogenous long-chain fatty acids into metabolically active CoA thioesters for subsequent degradation or incorporation into phospholipids. Plays an important role in the determination of viability in the stationary phase. The chain is Long-chain-fatty-acid--CoA ligase 2 (lcf2) from Schizosaccharomyces pombe (strain 972 / ATCC 24843) (Fission yeast).